A 383-amino-acid chain; its full sequence is ERCC4 domain-containing protein EP364R (383 aa).

In terms of domain architecture, ERCC4 spans 3–101 (FLVADHREHH…QLYFFVEGPA (99 aa)). The disordered stretch occupies residues 336–367 (LHKVSDEASENASHDASENASDKVSSPTGHQT). Basic and acidic residues predominate over residues 347–356 (ASHDASENAS). The segment covering 357 to 367 (DKVSSPTGHQT) has biased composition (polar residues).

Belongs to the asfivirus EP364R family.

In terms of biological role, plays a role in the inhibition of type I interferon signaling pathway. Mechanistically, specifically interacts with 2',3'-cGAMP and cleaves it via its phosphodiesterase activity. In turn, prevents 2',3'-cGAMP interaction with host ER-resident STING1 leading to inhibition of downstream signaling pathway and type I interferon production. This chain is ERCC4 domain-containing protein EP364R, found in Ornithodoros (relapsing fever ticks).